A 232-amino-acid polypeptide reads, in one-letter code: Sugar fermentation stimulation protein homolog (232 aa).

The protein belongs to the SfsA family.

The polypeptide is Sugar fermentation stimulation protein homolog (Alkaliphilus metalliredigens (strain QYMF)).